The primary structure comprises 397 residues: Lysophospholipid transporter LplT (397 aa).

11 helical membrane-spanning segments follow: residues 16–36 (MMAVIVAQFLSAFGDNALLFA), 53–73 (VLQMVFVCAYILLAPFVGQVA), 91–111 (LGAVVIVFGGNPFVGYTLVGV), 139–159 (LMESSTIAAILIGSMAGGMLA), 164–184 (GAALGVCALAYAGAVGANLLI), 229–249 (WGAGVTLRFLLVLWVPVALGI), 257–277 (YLNAMVAVGIVAGAGAAAKLV), 282–302 (VSRCMPAGILIGIAVIFFSLQ), 304–324 (AALPAYLLLLLIGFFGGFFVV), 344–364 (IAVQNLGENTAMLLMLGLYSL), and 372–392 (VVGIGVGFGAIFALAIAGLWL).

This sequence belongs to the major facilitator superfamily. LplT (TC 2.A.1.42) family.

It is found in the cell inner membrane. Its function is as follows. Catalyzes the facilitated diffusion of 2-acyl-glycero-3-phosphoethanolamine (2-acyl-GPE) into the cell. This is Lysophospholipid transporter LplT from Cronobacter sakazakii (strain ATCC BAA-894) (Enterobacter sakazakii).